A 259-amino-acid chain; its full sequence is tRNA pseudouridine synthase A (259 aa).

Asp-51 (nucleophile) is an active-site residue. Tyr-109 provides a ligand contact to substrate.

It belongs to the tRNA pseudouridine synthase TruA family. Homodimer.

The enzyme catalyses uridine(38/39/40) in tRNA = pseudouridine(38/39/40) in tRNA. In terms of biological role, formation of pseudouridine at positions 38, 39 and 40 in the anticodon stem and loop of transfer RNAs. The chain is tRNA pseudouridine synthase A from Colwellia psychrerythraea (strain 34H / ATCC BAA-681) (Vibrio psychroerythus).